A 1375-amino-acid polypeptide reads, in one-letter code: MQENNVQILVLDFGSQYTQLIARRLREYGVYTEIVPYFEKLDSIKSKNPKGIILSGGPASVYEKDAYKPDSAIFTLGIPILGICYGMQLIAQHFGGRVIKADAQEFGKAVLEIMESSQDSKDSSCFAFQGASQGIQAPMTLSFDIFSHHKFPQMLTALLDLWEDSVQASHIFLTKQHIAEIRLEVKAALQSSQNIITATDKKDFLGFIGVEKNKIEMLFVASSVFRKGIGKALLKEALERYLKDYPYILVDCNEQNTQGLAFYKSLGFEKVGMSEKDSAGRDFPIVHLKVSKAILKKALERGTSDSVANAFVCESERVFLRPYTQADFAALHKIVSDKETMYAWGQGFSKKQSQEWLDKQLAHYQQYGFGIWAIIEKQSGAIIGNAGLNHTEISLKGKTQKIVEIGYLLHRDFWGKGYGSEVARMCVKYGFETLGLEEVYCLIKEDNTASIKVAKRLEMQKVGEYPKPYKGKKISHLVFRLEKKVWQESKNNATQGFKSCSLFKGIKQDSIVWMSHADKVESIPQGFRELAKSGNTHYCAIADSKRKIYALQFHPEVVHSECGGQMLQNFAVGICGANTCWNMRHFAQNEIEKLRRIVYGGKAHCENPMSFMQIQEAFKHIGKAQTIQRLVEIWEEGARATHKDLSENEIAGMREEIREAILKSKNLLIAQKNEEWLGFIEIEKNEIAMLFVVPKAFRKGVGKALLKEAFMRYLGAFEVIKVNSLEWALGFYQALGFAKTGKKPIPAGSAGAFSPELIPLSIARESLQKSLGLEAQDSNEGVREKVRCAWATDKDEAARKLYEDYHDTEWGEPLHEDKKLFEHLVLEGFQAGLSWITILKKREAFRVAFDDFDPHIVANYDEDKIKELMRNEGIIRNRAKIEAAIINAKAFMAVQREFGSFDKYIWGFVGGKPIINAFESIADLPASTPLSDKIAKDLKKRGFKFVGTTTMYAMMQSIGMVNDHLTSCFKCNSSLGMQCDKILDFSQGTNTKSANLTKNPKNLHSHTANTRIVDSQHTESSDIKGQSHLESSADSGSAVSLRDFKSCEGATRGSYLEGNDRSGVANSLKITKETTSKVLCAVSGGVDSSVVAALLYRAIGENLIPVFVDTGLLRKGEREAVEKIFKENLKVPLITADASELFLSRLKGVLDPEIKRKIIGETFIEVFEKEAKKHNTKGEIKFLAQGTLYPDVIESVSVKGPSKTIKSHHNVGGLPEWMKFELIEPLRELFKDEVRALGRELGMPESMLMRHPFPGPGLAIRIMGEVNKADLDLLREADSIFIDELHKQSYYDKVWQAFCVLLNVRSVGVMGDNRTYDNTICVRAVEAIDGMTATFAHLPHDFLEGVSNRIINEVEGINRVVYDITSKPPGTIEWE.

One can recognise a Glutamine amidotransferase type-1; first part domain in the interval 7–119 (QILVLDFGSQ…VLEIMESSQD (113 aa)). Cys84 functions as the Nucleophile in the catalytic mechanism. Residues 120-500 (SKDSSCFAFQ…NNATQGFKSC (381 aa)) are insert-1. 2 consecutive N-acetyltransferase domains span residues 141 to 300 (LSFD…KALE) and 318 to 484 (VFLR…LEKK). The Glutamine amidotransferase type-1; second part domain maps to 501–580 (SLFKGIKQDS…AVGICGANTC (80 aa)). Active-site residues include His554 and Glu556. An insert-2 region spans residues 597–1071 (IVYGGKAHCE…SGVANSLKIT (475 aa)). The N-acetyltransferase 3 domain occupies 612-765 (MQIQEAFKHI…ELIPLSIARE (154 aa)). Residues 1011 to 1036 (RIVDSQHTESSDIKGQSHLESSADSG) form a disordered region. Residues 1014-1027 (DSQHTESSDIKGQS) show a composition bias toward basic and acidic residues. One can recognise a GMPS ATP-PPase domain in the interval 1055–1250 (YLEGNDRSGV…LGMPESMLMR (196 aa)). ATP is bound at residue 1083–1089 (SGGVDSS).

As to quaternary structure, homodimer.

It catalyses the reaction XMP + L-glutamine + ATP + H2O = GMP + L-glutamate + AMP + diphosphate + 2 H(+). The protein operates within purine metabolism; GMP biosynthesis; GMP from XMP (L-Gln route): step 1/1. Its function is as follows. Catalyzes the synthesis of GMP from XMP. This is Probable GMP synthase [glutamine-hydrolyzing] (guaA) from Helicobacter hepaticus (strain ATCC 51449 / 3B1).